The sequence spans 354 residues: Tryptophan--tRNA ligase (354 aa).

ATP is bound by residues 13–15 (QPT) and 21–22 (GN). The short motif at 14–22 (PTGNLHLGN) is the 'HIGH' region element. Residue Asp-137 participates in L-tryptophan binding. ATP-binding positions include 149–151 (GDD), Val-208, and 217–221 (KMSKS). The 'KMSKS' region motif lies at 217–221 (KMSKS).

It belongs to the class-I aminoacyl-tRNA synthetase family. In terms of assembly, homodimer.

It localises to the cytoplasm. It catalyses the reaction tRNA(Trp) + L-tryptophan + ATP = L-tryptophyl-tRNA(Trp) + AMP + diphosphate + H(+). Functionally, catalyzes the attachment of tryptophan to tRNA(Trp). The protein is Tryptophan--tRNA ligase of Rhizobium meliloti (strain 1021) (Ensifer meliloti).